A 270-amino-acid chain; its full sequence is MYFLLSPAKSLNETDAVPVHISNYYSQPELIEHSQALMKILKSKEPIDLQELMSISDDLSQLNAKRNQEWNWSVEQPFTDSASGNLAKPAGYLFDGDVYTGLDMYAMDKESAIYVNEHLGILSGLYGVLKPLDLIQPYRLEMGTKLKNECGDNLYEFWGEEVTNTINARMVDSDDTVLINLASNEYFKSVKKKALAAEIVTPRFEDEKNGQYKVISFYAKKARGLMVKYAADNKLTNAEQLKQFNLAGYYYVDELSDDKTWVFRRDAADQ.

This sequence belongs to the UPF0246 family.

The chain is UPF0246 protein Psyc_0554 from Psychrobacter arcticus (strain DSM 17307 / VKM B-2377 / 273-4).